A 319-amino-acid chain; its full sequence is Protoheme IX farnesyltransferase (319 aa).

The next 8 membrane-spanning stretches (helical) occupy residues 59–79, 108–128, 131–151, 158–178, 183–203, 232–252, 254–274, and 299–319; these read IGLI…AGAF, EALV…WFGA, LSAW…TIIL, NIVW…AAVT, WPAI…YWPL, VVLY…AGGA, WVYT…SHAL, and LTLL…VIGG.

This sequence belongs to the UbiA prenyltransferase family. Protoheme IX farnesyltransferase subfamily.

The protein resides in the cell membrane. The catalysed reaction is heme b + (2E,6E)-farnesyl diphosphate + H2O = Fe(II)-heme o + diphosphate. It participates in porphyrin-containing compound metabolism; heme O biosynthesis; heme O from protoheme: step 1/1. Converts heme B (protoheme IX) to heme O by substitution of the vinyl group on carbon 2 of heme B porphyrin ring with a hydroxyethyl farnesyl side group. The polypeptide is Protoheme IX farnesyltransferase (Pseudarthrobacter chlorophenolicus (strain ATCC 700700 / DSM 12829 / CIP 107037 / JCM 12360 / KCTC 9906 / NCIMB 13794 / A6) (Arthrobacter chlorophenolicus)).